The primary structure comprises 456 residues: Argininosuccinate lyase (456 aa).

The protein belongs to the lyase 1 family. Argininosuccinate lyase subfamily.

The protein localises to the cytoplasm. The enzyme catalyses 2-(N(omega)-L-arginino)succinate = fumarate + L-arginine. The protein operates within amino-acid biosynthesis; L-arginine biosynthesis; L-arginine from L-ornithine and carbamoyl phosphate: step 3/3. The chain is Argininosuccinate lyase from Shewanella pealeana (strain ATCC 700345 / ANG-SQ1).